The primary structure comprises 316 residues: Ribosomal RNA small subunit methyltransferase H (316 aa).

S-adenosyl-L-methionine is bound by residues 35 to 37 (SGH), aspartate 55, phenylalanine 84, aspartate 105, and glutamine 112.

It belongs to the methyltransferase superfamily. RsmH family.

It localises to the cytoplasm. The enzyme catalyses cytidine(1402) in 16S rRNA + S-adenosyl-L-methionine = N(4)-methylcytidine(1402) in 16S rRNA + S-adenosyl-L-homocysteine + H(+). Functionally, specifically methylates the N4 position of cytidine in position 1402 (C1402) of 16S rRNA. This chain is Ribosomal RNA small subunit methyltransferase H, found in Streptococcus pyogenes serotype M49 (strain NZ131).